The following is a 325-amino-acid chain: DNA-directed RNA polymerase subunit alpha (325 aa).

Residues M1 to E238 form an alpha N-terminal domain (alpha-NTD) region. The segment at K254 to F325 is alpha C-terminal domain (alpha-CTD).

Belongs to the RNA polymerase alpha chain family. As to quaternary structure, homodimer. The RNAP catalytic core consists of 2 alpha, 1 beta, 1 beta' and 1 omega subunit. When a sigma factor is associated with the core the holoenzyme is formed, which can initiate transcription.

It catalyses the reaction RNA(n) + a ribonucleoside 5'-triphosphate = RNA(n+1) + diphosphate. Its function is as follows. DNA-dependent RNA polymerase catalyzes the transcription of DNA into RNA using the four ribonucleoside triphosphates as substrates. The polypeptide is DNA-directed RNA polymerase subunit alpha (Leptospira borgpetersenii serovar Hardjo-bovis (strain JB197)).